The chain runs to 167 residues: L-alanine exporter AlaE (167 aa).

A run of 4 helical transmembrane segments spans residues 25–45 (GTEFLADTVALILFFTTTGII), 50–70 (IAGMSWDQVLHARLIGAALMI), 105–125 (FQVPIYAAIIAFSGATGGGLV), and 129–149 (LGAALMMLFLGRPYGAFLNWV).

Belongs to the AlaE exporter family.

Its subcellular location is the cell inner membrane. Functionally, exports L-alanine. This Pantoea sp. (strain At-9b) protein is L-alanine exporter AlaE.